The following is a 537-amino-acid chain: Phosphoenolpyruvate carboxykinase (ATP) (537 aa).

3 residues coordinate substrate: arginine 61, tyrosine 195, and lysine 201. ATP is bound by residues lysine 201, histidine 220, and glycine 236–threonine 244. Lysine 201 and histidine 220 together coordinate Mn(2+). Mn(2+) is bound at residue aspartate 257. Glutamate 285 contributes to the ATP binding site. Positions proline 311 to asparagine 321 are enriched in basic and acidic residues. A disordered region spans residues proline 311–glutamine 342. A substrate-binding site is contributed by arginine 323. ATP contacts are provided by arginine 323 and threonine 448.

It belongs to the phosphoenolpyruvate carboxykinase (ATP) family. It depends on Mn(2+) as a cofactor.

The protein localises to the cytoplasm. The enzyme catalyses oxaloacetate + ATP = phosphoenolpyruvate + ADP + CO2. Its pathway is carbohydrate biosynthesis; gluconeogenesis. In terms of biological role, involved in the gluconeogenesis. Catalyzes the conversion of oxaloacetate (OAA) to phosphoenolpyruvate (PEP) through direct phosphoryl transfer between the nucleoside triphosphate and OAA. This chain is Phosphoenolpyruvate carboxykinase (ATP), found in Rhodopseudomonas palustris (strain BisB5).